Reading from the N-terminus, the 89-residue chain is Omega-theraphotoxin-Ba1c (89 aa).

An N-terminal signal peptide occupies residues 1 to 23 (MRSLTLAAVLACSLLLVFHTSAA). A propeptide spanning residues 24–50 (EEHEAQEGYLMNPGDTDTALATVDDER) is cleaved from the precursor. Cystine bridges form between Cys-54–Cys-75, Cys-58–Cys-81, and Cys-67–Cys-86.

It belongs to the neurotoxin 12 (Hwtx-2) family. 06 (TXP1) subfamily. As to expression, expressed by the venom gland.

The protein localises to the secreted. Its function is as follows. Inhibits voltage-gated calcium channels (Cav) in rat cerebellar granule cells. Has insecticidal activity. The sequence is that of Omega-theraphotoxin-Ba1c from Brachypelma albiceps (Mexican golden redrump tarantula).